A 230-amino-acid chain; its full sequence is Probable dual specificity protein phosphatase DDB_G0283417 (230 aa).

The region spanning 78 to 230 (NNNYESINLY…LEIFEKELLF (153 aa)) is the Tyrosine-protein phosphatase domain. Cys174 (phosphocysteine intermediate) is an active-site residue.

Belongs to the protein-tyrosine phosphatase family. Non-receptor class dual specificity subfamily.

The enzyme catalyses O-phospho-L-tyrosyl-[protein] + H2O = L-tyrosyl-[protein] + phosphate. The catalysed reaction is O-phospho-L-seryl-[protein] + H2O = L-seryl-[protein] + phosphate. It catalyses the reaction O-phospho-L-threonyl-[protein] + H2O = L-threonyl-[protein] + phosphate. Has a dual specificity toward Ser/Thr and Tyr-containing proteins. This Dictyostelium discoideum (Social amoeba) protein is Probable dual specificity protein phosphatase DDB_G0283417.